A 72-amino-acid polypeptide reads, in one-letter code: Conotoxin LiC53 (72 aa).

The first 23 residues, 1–23 (MEKLTSLLLVAALLMLTQTLIQG), serve as a signal peptide directing secretion. Residues 24 to 41 (GGEDRPNKKFLQKIKSTA) constitute a propeptide that is removed on maturation. 3 cysteine pairs are disulfide-bonded: Cys-45–Cys-59, Cys-52–Cys-63, and Cys-58–Cys-68.

It belongs to the conotoxin O2 superfamily. As to expression, expressed by the venom duct.

Its subcellular location is the secreted. The chain is Conotoxin LiC53 from Conus lividus (Livid cone).